The sequence spans 427 residues: 3-phosphoshikimate 1-carboxyvinyltransferase (427 aa).

3 residues coordinate 3-phosphoshikimate: K22, S23, and R27. K22 lines the phosphoenolpyruvate pocket. Residues G96 and R124 each contribute to the phosphoenolpyruvate site. 3-phosphoshikimate-binding residues include S169, S170, Q171, S197, D313, N336, and K340. Q171 provides a ligand contact to phosphoenolpyruvate. The active-site Proton acceptor is the D313. 3 residues coordinate phosphoenolpyruvate: R344, R386, and K411.

It belongs to the EPSP synthase family. As to quaternary structure, monomer.

It is found in the cytoplasm. It carries out the reaction 3-phosphoshikimate + phosphoenolpyruvate = 5-O-(1-carboxyvinyl)-3-phosphoshikimate + phosphate. Its pathway is metabolic intermediate biosynthesis; chorismate biosynthesis; chorismate from D-erythrose 4-phosphate and phosphoenolpyruvate: step 6/7. Catalyzes the transfer of the enolpyruvyl moiety of phosphoenolpyruvate (PEP) to the 5-hydroxyl of shikimate-3-phosphate (S3P) to produce enolpyruvyl shikimate-3-phosphate and inorganic phosphate. This is 3-phosphoshikimate 1-carboxyvinyltransferase from Escherichia coli O8 (strain IAI1).